The following is a 467-amino-acid chain: MSLSLWQQCLARLQDELPATEFSMWIRPLQAELSDNTLALYAPNRFVLDWVRDKYLNNINGLLTSFCGADAPQLRFEVGTKPVTQTPQAAVTSNVAAPALVAQTQPQRAAPSTRSGWDNVPAPAEPTYRSNVNVKHTFDNFVEGKSNQLARAAARQVADNPGGAYNPLFLYGGTGLGKTHLLHAVGNGIMARKPNAKVVYMHSERFVQDMVKALQNNAIEEFKRYYRSVDALLIDDIQFFANKERSQEEFFHTFNALLEGNQQIILTSDRYPKEINGVEDRLKSRFGWGLTVAIEPPELETRVAILMKKADENDIRLPGEVAFFIAKRLRSNVRELEGALNRVIANANFTGRAITIDFVREALRDLLALQEKLVTIDNIQKTVAEYYKIKVADLLSKRRSRSVARPRQMAMALAKELTNHSLPEIGDAFGGRDHTTVLHACRKIEQLREESHDIKEDFSNLIRTLSS.

The interval 1-90 (MSLSLWQQCL…KPVTQTPQAA (90 aa)) is domain I, interacts with DnaA modulators. Positions 91-130 (VTSNVAAPALVAQTQPQRAAPSTRSGWDNVPAPAEPTYRS) are domain II. A domain III, AAA+ region region spans residues 131-347 (NVNVKHTFDN…GALNRVIANA (217 aa)). G175, G177, K178, and T179 together coordinate ATP. Residues 348-467 (NFTGRAITID…FSNLIRTLSS (120 aa)) are domain IV, binds dsDNA.

This sequence belongs to the DnaA family. Oligomerizes as a right-handed, spiral filament on DNA at oriC.

The protein localises to the cytoplasm. Functionally, plays an essential role in the initiation and regulation of chromosomal replication. ATP-DnaA binds to the origin of replication (oriC) to initiate formation of the DNA replication initiation complex once per cell cycle. Binds the DnaA box (a 9 base pair repeat at the origin) and separates the double-stranded (ds)DNA. Forms a right-handed helical filament on oriC DNA; dsDNA binds to the exterior of the filament while single-stranded (ss)DNA is stabiized in the filament's interior. The ATP-DnaA-oriC complex binds and stabilizes one strand of the AT-rich DNA unwinding element (DUE), permitting loading of DNA polymerase. After initiation quickly degrades to an ADP-DnaA complex that is not apt for DNA replication. Binds acidic phospholipids. This Shigella dysenteriae serotype 1 (strain Sd197) protein is Chromosomal replication initiator protein DnaA.